A 197-amino-acid chain; its full sequence is GTP cyclohydrolase 1 (197 aa).

Residues cysteine 88, histidine 91, and cysteine 160 each coordinate Zn(2+).

The protein belongs to the GTP cyclohydrolase I family. Homomer.

The catalysed reaction is GTP + H2O = 7,8-dihydroneopterin 3'-triphosphate + formate + H(+). It functions in the pathway cofactor biosynthesis; 7,8-dihydroneopterin triphosphate biosynthesis; 7,8-dihydroneopterin triphosphate from GTP: step 1/1. This Clostridium beijerinckii (strain ATCC 51743 / NCIMB 8052) (Clostridium acetobutylicum) protein is GTP cyclohydrolase 1.